Consider the following 90-residue polypeptide: Co-chaperonin GroES (90 aa).

The protein belongs to the GroES chaperonin family. Heptamer of 7 subunits arranged in a ring. Interacts with the chaperonin GroEL.

Its subcellular location is the cytoplasm. Functionally, together with the chaperonin GroEL, plays an essential role in assisting protein folding. The GroEL-GroES system forms a nano-cage that allows encapsulation of the non-native substrate proteins and provides a physical environment optimized to promote and accelerate protein folding. GroES binds to the apical surface of the GroEL ring, thereby capping the opening of the GroEL channel. The polypeptide is Co-chaperonin GroES (Phocaeicola vulgatus (strain ATCC 8482 / DSM 1447 / JCM 5826 / CCUG 4940 / NBRC 14291 / NCTC 11154) (Bacteroides vulgatus)).